The sequence spans 118 residues: Group 1 truncated hemoglobin GlbN (118 aa).

His-70 lines the heme pocket.

The protein belongs to the truncated hemoglobin family. Group I subfamily. In terms of assembly, monomer. It depends on heme as a cofactor.

The protein resides in the membrane. The polypeptide is Group 1 truncated hemoglobin GlbN (glbN) (Nostoc commune).